The following is a 509-amino-acid chain: Maturase K (509 aa).

Belongs to the intron maturase 2 family. MatK subfamily.

It localises to the plastid. The protein resides in the chloroplast. Usually encoded in the trnK tRNA gene intron. Probably assists in splicing its own and other chloroplast group II introns. The polypeptide is Maturase K (Eucommia ulmoides (Hardy rubber tree)).